A 323-amino-acid chain; its full sequence is tRNA dimethylallyltransferase (323 aa).

Position 12-19 (12-19 (GPTAAGKT)) interacts with ATP. 14–19 (TAAGKT) is a binding site for substrate. Interaction with substrate tRNA regions lie at residues 37–40 (DSAL) and 161–165 (QRLTR).

The protein belongs to the IPP transferase family. Monomer. Requires Mg(2+) as cofactor.

It catalyses the reaction adenosine(37) in tRNA + dimethylallyl diphosphate = N(6)-dimethylallyladenosine(37) in tRNA + diphosphate. Its function is as follows. Catalyzes the transfer of a dimethylallyl group onto the adenine at position 37 in tRNAs that read codons beginning with uridine, leading to the formation of N6-(dimethylallyl)adenosine (i(6)A). The sequence is that of tRNA dimethylallyltransferase from Pseudomonas fluorescens (strain ATCC BAA-477 / NRRL B-23932 / Pf-5).